Here is a 132-residue protein sequence, read N- to C-terminus: Ubiquinol-cytochrome c reductase complex assembly factor 4 (132 aa).

The N-terminal stretch at 1-15 is a signal peptide; the sequence is MNRVLCAPAAGAVRA. Over 16–78 the chain is Mitochondrial matrix; that stretch reads LRLIGRTSRS…GKGHQRPWWK (63 aa). A disordered region spans residues 24 to 73; the sequence is RSLHPLPGSRDRAHPAAEEQDDPDRPTEFSSSKANPRRWSVGHSMGKGHQ. The span at 32–50 shows a compositional bias: basic and acidic residues; it reads SRDRAHPAAEEQDDPDRPT. The chain crosses the membrane as a helical span at residues 79-95; that stretch reads VLPLSCFLVALIIWCYL. Topologically, residues 96 to 132 are mitochondrial intermembrane; sequence REESEADQWLRQVWGEVPEPSDRSEEPETPAAYRART. A disordered region spans residues 110 to 132; it reads GEVPEPSDRSEEPETPAAYRART.

It belongs to the UQCC4 family. As to quaternary structure, forms a complex, named COMB/coordinator of mitochondrial CYTB biogenesis, composed of UQCC1, UQCC2, UQCC4, UQCC5 and UQCC6; stabilizes nascent cytochrome b/MT-CYB and promotes its membrane insertion. Forms a complex, named COMA, composed of UQCC1, UQCC2 and UQCC4; activates MT-CYB translation. Forms a complex, named COMC, composed of UQCC1, UQCC2; UQCC3 and UQCC4; mediates MT-CYB hemylation and association with the first nuclear-encoded complex III subunit UQCRQ. Complexes COMA and COMB are bound to the mitochondrion inner membrane by UQCC4.

Its subcellular location is the mitochondrion inner membrane. In terms of biological role, required for the assembly and stability of the mitochondrial ubiquinol-cytochrome c reductase complex (complex III (CIII) or cytochrome b-c1 complex), a multisubunit transmembrane complex that is part of the mitochondrial electron transport chain (ETC) which drives oxidative phosphorylation. This chain is Ubiquinol-cytochrome c reductase complex assembly factor 4 (UQCC4), found in Pongo abelii (Sumatran orangutan).